Here is a 909-residue protein sequence, read N- to C-terminus: Protein translocase subunit SecA (909 aa).

ATP-binding positions include Q87 and 105–109 (GEGKT). Residues 246 to 265 (LEQQEKEDEEGKNGDGDYTI) are disordered. Basic and acidic residues predominate over residues 254-265 (EEGKNGDGDYTI). D512 contacts ATP. The segment covering 834-858 (ESDVEAVEEQRRQADEQPKQYEHET) has biased composition (basic and acidic residues). Positions 834 to 899 (ESDVEAVEEQ…NDPCPCGSGL (66 aa)) are disordered. Residues 859-875 (ASATQAPEQAPEAAPAA) show a composition bias toward low complexity. The Zn(2+) site is built by C893, C895, C904, and H905.

Belongs to the SecA family. As to quaternary structure, monomer and homodimer. Part of the essential Sec protein translocation apparatus which comprises SecA, SecYEG and auxiliary proteins SecDF-YajC and YidC. Requires Zn(2+) as cofactor.

The protein localises to the cell inner membrane. The protein resides in the cytoplasm. The enzyme catalyses ATP + H2O + cellular proteinSide 1 = ADP + phosphate + cellular proteinSide 2.. Its function is as follows. Part of the Sec protein translocase complex. Interacts with the SecYEG preprotein conducting channel. Has a central role in coupling the hydrolysis of ATP to the transfer of proteins into and across the cell membrane, serving both as a receptor for the preprotein-SecB complex and as an ATP-driven molecular motor driving the stepwise translocation of polypeptide chains across the membrane. The chain is Protein translocase subunit SecA from Pseudoalteromonas atlantica (strain T6c / ATCC BAA-1087).